Here is a 781-residue protein sequence, read N- to C-terminus: MSKESGKWWESDDKFAKAVYQQFVEFYEKVTGTDLELIQILKDHYNISLDNPLENPSSLFDLVARIKNNLKNSPDLYSHHFQSHGQLSDHPHALSSSSSHAEPRGENAVLSSEDLHKPGQVSVQLPGTNYVGPGNELQAGPPQSAVDSAARIHDFRYSQLAKLGINPYTHWTVADEELLKNIKNETGFQAQVVKDYFTLKGAAAPVAHFQGSLPEVPAYNASEKYPSMTSVNSAEASTGAGGGGSNPVKSMWSEGATFSANSVTCTFSRQFLIPYDPEHHYKVFSPAASSCHNASGKEAKVCTISPIMGYSTPWRYLDFNALNLFFSPLEFQHLIENYGSIAPDALTVTISEIAVKDVTDKTGGGVQVTDSTTGRLSMLVDHEYKYPYVLGQGQDTLAPELPIWVYFPPQYAYLTVGDVNTQGISGDSKKLASEESAFYVLEHSSFQLLGTGGTATMSYKFPPVPPENLEGCSQHFYEMYNPLYGSRLGVPDTLGGDPKFRSLTHEDHAIQPQNFMPGPLVNSVSTKEGDSSNTGAGKALTGLSTGTSQNTRISLRPGPVSQPYHHWDTDKYVPGINAISHGQTTYGNAEDKEYQQGVGRFPNEKEQLKQLQGLNMHTYFPNKGTQQYTDQIERPLMVGSVWNRRALHYESQLWSKIPNLDDSFKTQFAALGGWGLHQPPPQIFLKILPQSGPIGGIKSMGITTLVQYAVGIMTVTMTFKLGPRKATGRWNPQPGVYPPHAAGHLPYVLYDPTATDAKQHHRHGYEKPEELWTAKSRVHPL.

Positions 5-80 are binding to the host cell receptor and internalization; the sequence is SGKWWESDDK…KNSPDLYSHH (76 aa). Residues 77-111 form a disordered region; it reads YSHHFQSHGQLSDHPHALSSSSSHAEPRGENAVLS. The phospholipase A2-like stretch occupies residues 123 to 181; that stretch reads VQLPGTNYVGPGNELQAGPPQSAVDSAARIHDFRYSQLAKLGINPYTHWTVADEELLKN. Polar residues-rich tracts occupy residues 524 to 535 and 542 to 553; these read VSTKEGDSSNTG and GLSTGTSQNTRI. A disordered region spans residues 524 to 561; that stretch reads VSTKEGDSSNTGAGKALTGLSTGTSQNTRISLRPGPVS. The Nuclear localization signal signature appears at 720 to 730; sequence KLGPRKATGRW.

It belongs to the parvoviridae capsid protein family. Heteromultimer of isoform Minor capsid protein VP1, isoform Minor capsid protein VP2 and isoform Major capsid protein VP3. As to quaternary structure, heteromultimer of isoform Minor capsid protein VP1, isoform Minor capsid protein VP2 and isoform Major capsid protein VP3. 20 fold more abundant than the minor capsid protein VP1.

It is found in the virion. It localises to the host nucleus. The protein resides in the host cytoplasm. It catalyses the reaction a 1,2-diacyl-sn-glycero-3-phosphocholine + H2O = a 1-acyl-sn-glycero-3-phosphocholine + a fatty acid + H(+). Capsid protein self-assembles to form an icosahedral capsid with a T=1 symmetry, about 20 nm in diameter, and consisting of 60 copies of two size variants of the capsid proteins, VP1 and VP2, which differ by the presence of an N-terminal extension in the minor protein VP1. The capsid encapsulates the genomic ssDNA. Binds to erythroid progenitor cells expressing high levels of P antigen and uses host ITGA5-ITGB1 and XRCC5/Ku80 autoantigen as coreceptors on the cell surface to provide virion attachment to target cell. This attachment induces virion internalization predominantly through clathrin-dependent endocytosis. Binding to the host receptors also induces capsid rearrangements leading to surface exposure of VP1 N-terminus, specifically its phospholipase A2-like region. The additional N-terminal region of isoform Minor capsid protein VP1, called VP1u, may serve as a lipolytic enzyme to breach the endosomal membrane during entry into host cell and might contribute to virus transport to the nucleus. The polypeptide is Minor capsid protein VP1 (vp) (Human parvovirus B19 (strain HV) (HPV B19)).